The sequence spans 340 residues: ATP-dependent 6-phosphofructokinase (340 aa).

Glycine 11 lines the ATP pocket. 21 to 25 (RAVVR) contributes to the ADP binding site. Residues 72–73 (RY) and 102–105 (GDGS) each bind ATP. Residue aspartate 103 participates in Mg(2+) binding. 125-127 (TID) contacts substrate. Residue aspartate 127 is the Proton acceptor of the active site. Residue arginine 154 participates in ADP binding. Residues arginine 162 and 169-171 (MGR) contribute to the substrate site. ADP contacts are provided by residues 185-187 (GAD), lysine 211, and 213-215 (KNH). Residues glutamate 222, arginine 244, and 250-253 (HIQR) contribute to the substrate site.

It belongs to the phosphofructokinase type A (PFKA) family. ATP-dependent PFK group I subfamily. Prokaryotic clade 'B1' sub-subfamily. Homotetramer. Requires Mg(2+) as cofactor.

The protein resides in the cytoplasm. It carries out the reaction beta-D-fructose 6-phosphate + ATP = beta-D-fructose 1,6-bisphosphate + ADP + H(+). Its pathway is carbohydrate degradation; glycolysis; D-glyceraldehyde 3-phosphate and glycerone phosphate from D-glucose: step 3/4. With respect to regulation, allosterically activated by ADP and other diphosphonucleosides, and allosterically inhibited by phosphoenolpyruvate. In terms of biological role, catalyzes the phosphorylation of D-fructose 6-phosphate to fructose 1,6-bisphosphate by ATP, the first committing step of glycolysis. The sequence is that of ATP-dependent 6-phosphofructokinase from Lactococcus lactis subsp. lactis (Streptococcus lactis).